Consider the following 219-residue polypeptide: MTDDTAAPPPRGPARDWKSSPLVSGLLLGLFSLVSALMLALASDATRGPIAARSAEDLLASLAQVLPAALHDNDPTADIRTLADADEGAVRVYVATRGGAVTAVTFELTGYGYGGAIRVLMAVAADGTILGARVLSHTETPGLGDKIEIGKDDWIEGFAGRSLTDPGPAGWKVRRDGGVFDQFSGATITPRAVVGTIHRGLTLFDRHRAELLAPLPLRS.

A helical membrane pass occupies residues 25–45; it reads GLLLGLFSLVSALMLALASDA. Position 187 is an FMN phosphoryl threonine (Thr-187).

It belongs to the RnfG family. In terms of assembly, the complex is composed of six subunits: RnfA, RnfB, RnfC, RnfD, RnfE and RnfG. FMN is required as a cofactor.

It is found in the cellular chromatophore membrane. Its function is as follows. Part of a membrane-bound complex that couples electron transfer with translocation of ions across the membrane. The protein is Ion-translocating oxidoreductase complex subunit G of Cereibacter sphaeroides (strain ATCC 17029 / ATH 2.4.9) (Rhodobacter sphaeroides).